A 497-amino-acid chain; its full sequence is Cytochrome P450 CYP94D108 (497 aa).

A helical membrane pass occupies residues 6-26 (LLSLALLLLAAAAAAAFVLFP). Residue C439 coordinates heme.

It belongs to the cytochrome P450 family. Mainly expressed in roots and, at low levels, in leaves, fruits and stems.

The protein localises to the membrane. Its pathway is steroid metabolism; cholesterol metabolism. Functionally, involved in the biosynthesis of spiroketal steroid and saponin natural products from cholesterol such as diosgenin and analogs (e.g. furostanol and spirostanol), plant defense compounds used as main precursors for the industrial production of steroid hormones. During the 5,6-spiroketalization of cholesterol, may catalyze the 27-monohydroxylation of furostanol-type steroid to an intermediate product that undergoes a stereospecific formation of the terminal heterocycle to yield diosgenin. In Paris polyphylla (Daiswa polyphylla), this protein is Cytochrome P450 CYP94D108.